The primary structure comprises 310 residues: Protein-L-isoaspartate O-methyltransferase (310 aa).

2 disordered regions span residues 1-44 and 67-88; these read MSGE…DKPA and AKPA…PAAP. Residues 14-29 are compositionally biased toward basic and acidic residues; sequence EDLKRAPRKSEGRPGE. A compositionally biased stretch (low complexity) spans 32–44; sequence AAGAVPKAADKPA. Residues 75–86 show a composition bias toward pro residues; sequence PTAPKPALPKPA. Ser-157 is a catalytic residue.

Belongs to the methyltransferase superfamily. L-isoaspartyl/D-aspartyl protein methyltransferase family.

It is found in the cytoplasm. It carries out the reaction [protein]-L-isoaspartate + S-adenosyl-L-methionine = [protein]-L-isoaspartate alpha-methyl ester + S-adenosyl-L-homocysteine. Functionally, catalyzes the methyl esterification of L-isoaspartyl residues in peptides and proteins that result from spontaneous decomposition of normal L-aspartyl and L-asparaginyl residues. It plays a role in the repair and/or degradation of damaged proteins. The chain is Protein-L-isoaspartate O-methyltransferase from Burkholderia orbicola (strain MC0-3).